Consider the following 82-residue polypeptide: U-actitoxin-Avd3k (82 aa).

The signal sequence occupies residues 1–16 (MVFLLCFFLVADVSYG). The 51-residue stretch at 21-71 (CLLPMDVGRCRARHPRYYYNSSSKRCEKFIYGGCRGNANNFITKKECEKVC) folds into the BPTI/Kunitz inhibitor domain. Cystine bridges form between Cys-21–Cys-71, Cys-30–Cys-54, and Cys-46–Cys-67. Positions 76–82 (RDSPKEN) are excised as a propeptide.

The protein belongs to the venom Kunitz-type family. Sea anemone type 2 potassium channel toxin subfamily.

Its subcellular location is the secreted. The protein localises to the nematocyst. In terms of biological role, dual-function toxin that inhibits both the serine protease trypsin and voltage-gated potassium channels Kv1.2/KCNA2. This is U-actitoxin-Avd3k from Anemonia viridis (Snakelocks anemone).